The primary structure comprises 180 residues: Hypoxanthine-guanine phosphoribosyltransferase (180 aa).

Lys43 and Gly44 together coordinate diphosphate. Residues Glu99 and Asp100 each coordinate Mg(2+). Asp103 functions as the Proton acceptor in the catalytic mechanism. GMP contacts are provided by residues Lys131, 152–153 (FI), and Asp159. Diphosphate is bound at residue Arg165.

The protein belongs to the purine/pyrimidine phosphoribosyltransferase family. Requires Mg(2+) as cofactor.

It is found in the cytoplasm. The enzyme catalyses IMP + diphosphate = hypoxanthine + 5-phospho-alpha-D-ribose 1-diphosphate. It catalyses the reaction GMP + diphosphate = guanine + 5-phospho-alpha-D-ribose 1-diphosphate. Its pathway is purine metabolism; IMP biosynthesis via salvage pathway; IMP from hypoxanthine: step 1/1. The protein operates within purine metabolism; GMP biosynthesis via salvage pathway; GMP from guanine: step 1/1. Functionally, purine salvage pathway enzyme that catalyzes the transfer of the ribosyl-5-phosphate group from 5-phospho-alpha-D-ribose 1-diphosphate (PRPP) to the N9 position of the 6-oxopurines hypoxanthine and guanine to form the corresponding ribonucleotides IMP (inosine 5'-monophosphate) and GMP (guanosine 5'-monophosphate), with the release of PPi. This chain is Hypoxanthine-guanine phosphoribosyltransferase (hpt), found in Streptococcus agalactiae serotype III (strain NEM316).